We begin with the raw amino-acid sequence, 183 residues long: Peptide deformylase (183 aa).

Residues Cys111 and His154 each contribute to the Fe cation site. Residue Glu155 is part of the active site. Residue His158 participates in Fe cation binding.

Fe(2+) serves as cofactor.

The enzyme catalyses N-terminal N-formyl-L-methionyl-[peptide] + H2O = N-terminal L-methionyl-[peptide] + formate. In terms of biological role, removes the formyl group from the N-terminal Met of newly synthesized proteins. Requires at least a dipeptide for an efficient rate of reaction. N-terminal L-methionine is a prerequisite for activity but the enzyme has broad specificity at other positions. The polypeptide is Peptide deformylase (Staphylococcus aureus).